A 326-amino-acid polypeptide reads, in one-letter code: PDZ domain-containing protein MAGIX (326 aa).

The segment at 1–32 (MDSHAGNTADPRGSRRGVGLQGSGSPRARQLL) is disordered. One can recognise a PDZ domain in the interval 128–212 (SVELVRGPAG…RLCLVLQRPQ (85 aa)). Residues 214-267 (MNGSRSKEVGGGHQKTDRIPDPRGGRMMESRGTISPVHHRPKTRTGPGPSPESV) are disordered. The segment covering 218 to 242 (RSKEVGGGHQKTDRIPDPRGGRMME) has biased composition (basic and acidic residues). A Phosphoserine modification is found at serine 263.

The protein is PDZ domain-containing protein MAGIX (Magix) of Rattus norvegicus (Rat).